Here is a 176-residue protein sequence, read N- to C-terminus: Secreted LysM effector ELP2 (176 aa).

Residues 1–18 (MQFSIFTVLAAAASFAVA) form the signal peptide. Low complexity predominate over residues 31–45 (TSAAANPSPTTSGAA). The segment at 31 to 50 (TSAAANPSPTTSGAANPSPT) is disordered. Residues 58-102 (HKTTVKAGQTLTTIAERFHSGICDIAWQNKLENPNVIFVGQVLLV) enclose the LysM 1 domain. The N-linked (GlcNAc...) asparagine glycan is linked to Asn111. The 45-residue stretch at 129 to 173 (ATYTIKSGDTFFAVAQSLGITTDSLTGANPGVVPENLQIDQVINV) folds into the LysM 2 domain.

It belongs to the secreted LysM effector family. In terms of assembly, forms homodimers in a chitin-independent manner through interactions at the N-termini of EPL2 monomers. Homodimers are further polymerized in a chitin-dependent manner.

Its subcellular location is the secreted. In terms of biological role, secreted effector that enables the plant pathogenic fungus to manipulate host defenses for successful infection. Binds chitin oligomers and polymer with high affinity and plays a dual role, not only in the suppression of chitin-triggered immune responses, but also in appressorium function. Does not protect fungal hyphae against plant chitinases but suppresses chitin-triggered plant immune responses. Chitin-induced polymerization of homodimers forms a contiguous ELP2 highly oligomeric super-complexe that may precipitate at infection sites to eliminate chitin oligomers, and thus suppress the activation of chitin-induced plant immunity. The sequence is that of Secreted LysM effector ELP2 from Colletotrichum higginsianum (strain IMI 349063) (Crucifer anthracnose fungus).